Reading from the N-terminus, the 386-residue chain is 2,3-diketo-5-methylthiopentyl-1-phosphate enolase (386 aa).

K85 acts as the Proton acceptor in catalysis. Substrate is bound by residues K131, 157 to 160 (KDDE), H248, G316, and 338 to 339 (GT). Mg(2+) contacts are provided by K157, D159, and E160. K157 carries the post-translational modification N6-carboxylysine.

This sequence belongs to the RuBisCO large chain family. Type IV subfamily. As to quaternary structure, homodimer. Mg(2+) is required as a cofactor.

It carries out the reaction 5-methylsulfanyl-2,3-dioxopentyl phosphate = 2-hydroxy-5-methylsulfanyl-3-oxopent-1-enyl phosphate. Its pathway is amino-acid biosynthesis; L-methionine biosynthesis via salvage pathway; L-methionine from S-methyl-5-thio-alpha-D-ribose 1-phosphate: step 3/6. In terms of biological role, catalyzes the enolization of 2,3-diketo-5-methylthiopentyl-1-phosphate (DK-MTP-1-P) into 2-hydroxy-3-keto-5-methylthiopentenyl-1-phosphate (HK-MTPenyl-1-P). This is 2,3-diketo-5-methylthiopentyl-1-phosphate enolase (mtnW) from Microcystis aeruginosa.